Reading from the N-terminus, the 625-residue chain is Archaeosine synthase subunit alpha (625 aa).

One can recognise a PUA domain in the interval 556–624 (KYVVKIDDFV…VAVDVRHVKK (69 aa)).

This sequence belongs to the archaeosine synthase type 1 family. In terms of assembly, forms a robust complex with the archaeosine synthase beta subunit RaSEA. Formation of this complex highly increases lysine transfer activity. The complex likely consists of an alpha(2)beta(2) heterotetrameric structure.

The catalysed reaction is 7-cyano-7-carbaguanosine(15) in tRNA + L-lysine = 7-N-[(5S)-5-amino-5-carboxypentyl]formamidino-7-deazaguanosine(15) in tRNA. It participates in tRNA modification; archaeosine-tRNA biosynthesis. Functionally, functions in the biosynthesis of archaeosine, a modified nucleoside present in the dihydrouridine loop (D-loop) of archaeal tRNAs. Catalyzes the addition of L-lysine to the cyano group of 7-cyano-7-deazaguanine (preQ0)-modified tRNAs at position 15, to generate q0kN15-tRNA, a q0N lysine adduct identified as 7-N-[(5S)-5-amino-5-carboxypentyl]formamidino-7-deazaguanosine. The protein is Archaeosine synthase subunit alpha of Methanosarcina acetivorans (strain ATCC 35395 / DSM 2834 / JCM 12185 / C2A).